A 394-amino-acid polypeptide reads, in one-letter code: Protein TsgA homolog (394 aa).

Helical transmembrane passes span 11–31 (WISF…GMVL), 51–71 (FLNA…EIVP), 76–96 (LIFG…SHSL), 101–121 (LCMF…TFLI), 135–155 (LFTD…AAAI), 163–183 (YWVY…ALCF), 205–225 (LGVA…LGFI), 245–265 (SVVG…SAIL), 273–293 (IVTA…NTTD), 299–319 (WIIM…ITLG), 333–353 (FILT…GPIV), and 362–382 (LATT…LGFV).

Belongs to the major facilitator superfamily. TsgA family.

The protein localises to the cell inner membrane. The polypeptide is Protein TsgA homolog (Erwinia tasmaniensis (strain DSM 17950 / CFBP 7177 / CIP 109463 / NCPPB 4357 / Et1/99)).